A 157-amino-acid chain; its full sequence is Lipoprotein signal peptidase (157 aa).

A run of 4 helical transmembrane segments spans residues Leu10–Ile30, Ser38–Phe58, Leu59–Ile79, and Leu84–Leu104. Catalysis depends on residues Asp114 and Asp131. A helical membrane pass occupies residues Phe122–Leu142.

It belongs to the peptidase A8 family.

The protein resides in the cell inner membrane. It catalyses the reaction Release of signal peptides from bacterial membrane prolipoproteins. Hydrolyzes -Xaa-Yaa-Zaa-|-(S,diacylglyceryl)Cys-, in which Xaa is hydrophobic (preferably Leu), and Yaa (Ala or Ser) and Zaa (Gly or Ala) have small, neutral side chains.. Its pathway is protein modification; lipoprotein biosynthesis (signal peptide cleavage). Functionally, this protein specifically catalyzes the removal of signal peptides from prolipoproteins. The protein is Lipoprotein signal peptidase of Helicobacter pylori (strain HPAG1).